A 265-amino-acid polypeptide reads, in one-letter code: MPEPTFHELAQLPPPVLRQLIRRGDYAGHTSGLGQRHLQANLVILQKSWADEFLRFCALNPRACPLLDVSEPGSPHFARLGADIDVRSDLPRYRVHRRGQEPVEVNDIGAFWEADFVAFAIGCSFSFEQALLDAGIGLRHLELGRNVAMYRTAIATRPSGRLAGPTVVSMRPLKAAEAIRAIQITSRFPMTHGAPLHLGDPALIGIRDLARPDYGDPVPLAADEIPLFWACGVTPQAVLAEAQPELYISHAPGHMLVSDRLYDEL.

This sequence belongs to the D-glutamate cyclase family.

In Pseudomonas aeruginosa (strain UCBPP-PA14), this protein is Putative hydro-lyase PA14_37210.